The sequence spans 921 residues: Sodium/calcium exchanger 2 (921 aa).

A signal peptide spans 1–20 (MAPLALVGVALLLGAPHCLG). Residues 21–68 (EATPTPSLPPPPANDSDASPGGCQGSYRCQPGVLLPVWEPDDPSLGDK) lie on the Extracellular side of the membrane. The tract at residues 23 to 42 (TPTPSLPPPPANDSDASPGG) is disordered. Asn34 carries N-linked (GlcNAc...) asparagine glycosylation. The helical transmembrane segment at 69-90 (AARAVVYFVAMVYMFLGLSIIA) threads the bilayer. Over 91 to 130 (DRFMASIEVITSKEKEITITKANGETSVGTVRIWNETVSN) the chain is Cytoplasmic. A helical membrane pass occupies residues 131 to 152 (LTLMALGSSAPEILLSVIEVCG). The Alpha-1 repeat unit spans residues 135–175 (ALGSSAPEILLSVIEVCGHNFQAGELGPGTIVGSAAFNMFV). Topologically, residues 153-164 (HNFQAGELGPGT) are extracellular. A helical transmembrane segment spans residues 165-185 (IVGSAAFNMFVVIAVCVYVIP). Residues 186–196 (AGESRKIKHLR) are Cytoplasmic-facing. Residues 197-219 (VFFVTASWSIFAYVWLYLILAVF) traverse the membrane as a helical segment. The Extracellular segment spans residues 220–222 (SPG). The helical transmembrane segment at 223–246 (VVQVWEALLTLVFFPVCVVFAWMA) threads the bilayer. At 247-720 (DKRLLFYKYV…DGSREERLPS (474 aa)) the chain is on the cytoplasmic side. Residues 248–267 (KRLLFYKYVYKRYRTDPRSG) are putative calmodulin-binding region. A disordered region spans residues 372-391 (AADAARRPGANDGAPDDEDD). 2 consecutive Calx-beta domains span residues 384–483 (GAPD…VRLL) and 512–612 (ATVT…IELG). Glu407, Asp443, Asp468, Asp469, Ile471, Glu473, Glu476, Asp518, Asp519, Asp520, Glu536, Asp598, Glu599, and Glu600 together coordinate Ca(2+). Ser622 carries the phosphoserine modification. Position 665 (Glu665) interacts with Ca(2+). The chain crosses the membrane as a helical span at residues 721-740 (CFDYVMHFLTVFWKVLFACL). The Extracellular segment spans residues 741–747 (PPTEYCH). A helical membrane pass occupies residues 748–770 (GWACFGVCILVIGLLTALIGDLA). At 771-772 (SH) the chain is on the cytoplasmic side. A helical transmembrane segment spans residues 773-791 (FGCTVGLKDSVNAVVFVAL). One copy of the Alpha-2 repeat lies at 790-826 (ALGTSIPDTFASKVAALQDQCADASIGNVTGSNAVNV). The Extracellular portion of the chain corresponds to 792–822 (GTSIPDTFASKVAALQDQCADASIGNVTGSN). Asn817 carries N-linked (GlcNAc...) asparagine glycosylation. Residues 823–843 (AVNVFLGLGVAWSVAAVYWAV) traverse the membrane as a helical segment. Over 844–854 (QGRPFEVRTGT) the chain is Cytoplasmic. The chain crosses the membrane as a helical span at residues 855-875 (LAFSVTLFTVFAFVGIAVLLY). Residues 876 to 892 (RRRPHIGGELGGPRGPK) are Extracellular-facing. A helical membrane pass occupies residues 893–909 (LATTALFLGLWFLYILF). The Cytoplasmic portion of the chain corresponds to 910–921 (ASLEAYCHIRGF).

Belongs to the Ca(2+):cation antiporter (CaCA) (TC 2.A.19) family. SLC8 subfamily. As to expression, detected in neocortex and hippocampus on pyramidal cells, astrocyte processes and dendrites (at protein level). Brain and skeletal muscle.

The protein resides in the cell membrane. Its subcellular location is the basolateral cell membrane. The protein localises to the perikaryon. It localises to the cell projection. It is found in the dendrite. The protein resides in the dendritic spine. The enzyme catalyses Ca(2+)(in) + 3 Na(+)(out) = Ca(2+)(out) + 3 Na(+)(in). Its activity is regulated as follows. Calcium transport is down-regulated by Na(+) and stimulated by Ca(2+). In terms of biological role, mediates the electrogenic exchange of Ca(2+) against Na(+) ions across the cell membrane, and thereby contributes to the regulation of cytoplasmic Ca(2+) levels and Ca(2+)-dependent cellular processes. Contributes to cellular Ca(2+) homeostasis in excitable cells. Contributes to the rapid decrease of cytoplasmic Ca(2+) levels back to baseline after neuronal activation, and thereby contributes to modulate synaptic plasticity, learning and memory. Plays a role in regulating urinary Ca(2+) and Na(+) excretion. The sequence is that of Sodium/calcium exchanger 2 (Slc8a2) from Rattus norvegicus (Rat).